The sequence spans 619 residues: Long-chain fatty acid transport protein 6 (619 aa).

The next 2 helical transmembrane spans lie at 22 to 42 (LLFP…RYGI) and 119 to 139 (VHVW…NSNL). 221 to 232 (YIFTSGTTGLPK) is an AMP binding site.

Belongs to the ATP-dependent AMP-binding enzyme family.

The protein resides in the cell membrane. It localises to the sarcolemma. It catalyses the reaction a fatty acid(in) = a fatty acid(out). The enzyme catalyses hexadecanoate(out) = hexadecanoate(in). The catalysed reaction is (9Z,12Z)-octadecadienoate(out) = (9Z,12Z)-octadecadienoate(in). It carries out the reaction (9Z)-octadecenoate(out) = (9Z)-octadecenoate(in). It catalyses the reaction a very long-chain fatty acid + ATP + CoA = a very long-chain fatty acyl-CoA + AMP + diphosphate. The enzyme catalyses tetracosanoate + ATP + CoA = tetracosanoyl-CoA + AMP + diphosphate. The catalysed reaction is a long-chain fatty acid + ATP + CoA = a long-chain fatty acyl-CoA + AMP + diphosphate. It carries out the reaction (9Z)-octadecenoate + ATP + CoA = (9Z)-octadecenoyl-CoA + AMP + diphosphate. It catalyses the reaction (5Z,8Z,11Z,14Z)-eicosatetraenoate + ATP + CoA = (5Z,8Z,11Z,14Z)-eicosatetraenoyl-CoA + AMP + diphosphate. In terms of biological role, mediates the import of long-chain fatty acids (LCFA) into the cell by facilitating their transport at the plasma membrane. Also functions as an acyl-CoA ligase catalyzing the ATP-dependent formation of fatty acyl-CoA using LCFA and very-long-chain fatty acids (VLCFA) as substrates. Plays a pivotal role in regulating available LCFA substrates from exogenous sources in tissues undergoing high levels of beta-oxidation such as the heart. The polypeptide is Long-chain fatty acid transport protein 6 (Slc27a6) (Mus musculus (Mouse)).